A 1063-amino-acid chain; its full sequence is MSQTPIKKEESNDQDDKFEFKKYINEGKLPLKADNPKKKPQLGTIQANQPIPSIFDNLFNLFKVINTTYTFLYLRNSLTITFPLLNSSVKQSLKKELTIGDLSQLREICPQIIELNYKSLASLALEINKNVYTDLNPELYTGSTVSQSSEYVLVIELLETQERSSKRRRREGPTMKANIQRQKLDFNNLKKAIELRNQKFLQGIKEYIKKCQLTELDPTQQLLTQSRKNQPVPPDSPSIPNDSIENCNLNTKACSIEELLNEIASESSYEGQIVQEALHTYPAVEAQYGALSRPLSQELINALYTSRNIEKTYKHQADAINHLWNGFHVIVSTSTSSGKSLIYQIPILQSLLEDNQSTAFFVFPTKSLAQDQKKSLIDILSYMPTLKNIRVDTFDGDTPLESRESIIRSANIIFTNPDMLHQTILPNANRWYYFFKNLKLFVLDEAHVYNGIFGVHVAFVLRRMRRIAEYFGNSQYRFVSCSATIEDPLQHMKKIFGVDNIKLINYTSSPSGSKKFVMWNPPYVDPKHPDDGKKSAISEASKLLIKFAEKRVRTIVFCRVRKTCESLMRLVRQELKTKQKGDLLSKIQSYRAGYTVQERRKIESEMFNGKLYGIIATNALELGIDIGSLDAVITIGFPYSLSNLRQQFGRAGRRNKSSLAVYIVETFPVDQFYLKHPILIHTQPNAELTLDLTNEVLLASHLQCAAYELPINIRSDEKFFGNQIQDICEANLEMVEESYRPHPKYLPFPASQVRIRSVSEDMFTLVDVTNDKNVILELLEPFRVALTAYEGAVYVYQGKTFIIRLLNINKRIITAHQVDVEWSTLQRDFTDVDPVRSLMKKTMHGSTNIYFGAVKATLHVFGYFKVNKQKDILDVVDITDHPVEIDSRGFWIDVPWHIIEVLSLKKINGAASIHAAQHALLSLMPIFISNSGNDIRTECKAGEKEYKEAKSERRRPSRLIFYDNCGDSSGAGLCNKAYEHTDELITMAIERIESCDCKVREGCPGCITSSKFEGGVCSGEVLDKVGALILLKMLLCQHVNLDIYADGPEIDSYHALRTLIPSC.

Residues 224-243 form a disordered region; that stretch reads TQSRKNQPVPPDSPSIPNDS. One can recognise a Helicase ATP-binding domain in the interval 320–503; sequence INHLWNGFHV…KIFGVDNIKL (184 aa). An ATP-binding site is contributed by 333-340; that stretch reads TSTSSGKS. Positions 444-447 match the DEAH box motif; it reads DEAH. The 179-residue stretch at 539 to 717 folds into the Helicase C-terminal domain; sequence EASKLLIKFA…ELPINIRSDE (179 aa).

Belongs to the helicase family. HRQ1 subfamily. In terms of assembly, forms heptamer rings. Interacts with rhp14. It depends on Mg(2+) as a cofactor.

The protein resides in the nucleus. The enzyme catalyses Couples ATP hydrolysis with the unwinding of duplex DNA by translocating in the 3'-5' direction.. The catalysed reaction is ATP + H2O = ADP + phosphate + H(+). Its function is as follows. Helicase with 3'-5' helicase activity involved in genome stability. Functions in the nucleotide excision repair (NER) pathway and plays a critical role in DNA interstrand cross-link repair. Unwinds relatively long duplex DNA up to 120-bp and requires a long 3'-tail of at least 70 nucleotides for efficient unwinding of duplex DNA. Shows both processive helicase and DNA strand annealing activities. Affects telomere length by a non-catalytic mechanism, probably through inhibiting telomerase by competing with it for ssDNA binding. The polypeptide is ATP-dependent helicase hrq1 (Schizosaccharomyces pombe (strain 972 / ATCC 24843) (Fission yeast)).